We begin with the raw amino-acid sequence, 441 residues long: Actin-related protein 4 (441 aa).

A disordered region spans residues 48-73 (VDVDSTKTNSNSEDSKTESEKEKSKR). The span at 60–70 (EDSKTESEKEK) shows a compositional bias: basic and acidic residues.

The protein belongs to the actin family. ARP4 subfamily. In terms of assembly, component of the SWR1 chromatin-remodeling complex and of the NuA4 histone acetyltransferase complex. Interacts with the SWI/SNF complex. Interacts with EAF1A and EAF1B. As to expression, mostly expressed in flowers, and, to a lower extent, in roots, seedlings, leaves and siliques (at protein level).

The protein localises to the nucleus. It localises to the cytoplasm. Its function is as follows. Involved in several developmental processes including organization of plant organs, flowering time, anther development, flower senescence and fertility, probably by regulating the chromatin structure. The sequence is that of Actin-related protein 4 from Arabidopsis thaliana (Mouse-ear cress).